The primary structure comprises 373 residues: MSEKKINLLDLDRKAMRALFADLGEKPFRADQLMKWIYHFGVSDFEEMTNINKVLRQKLAARCEIVAPEISGYQKSADGTIKFAIHVGEGQEVETVYIPEDDRATLCVSSQVGCALECTFCSTAQQGFNRNLTVSEIVGQIWRVSHFLGFAKETGERPITNVVMMGMGEPLLNLANVIPAMDIMLDDFGFSLSKRRVTLSTSGVVPALDKLGDALDVALAVSIHAPNDELRDILVPVNKKYPLQEFLAGIRRYIAKSNANRGRVTVEYVMLDHINDSTEQAHELAQLMKDTPCKVNLIPFNPYPGSPYGRSSNSRIDRFSKVLMEYGLTVIVRKTRGDDIDAACGQLAGDIRDRTKRLAKKRMQENQISVTMN.

Residue glutamate 94 is the Proton acceptor of the active site. Residues glutamate 100–aspartate 339 enclose the Radical SAM core domain. An intrachain disulfide couples cysteine 107 to cysteine 344. [4Fe-4S] cluster is bound by residues cysteine 114, cysteine 118, and cysteine 121. Residues glycine 168–glutamate 169, serine 200, serine 222–histidine 224, and asparagine 301 each bind S-adenosyl-L-methionine. Cysteine 344 (S-methylcysteine intermediate) is an active-site residue.

This sequence belongs to the radical SAM superfamily. RlmN family. [4Fe-4S] cluster is required as a cofactor.

It is found in the cytoplasm. It carries out the reaction adenosine(2503) in 23S rRNA + 2 reduced [2Fe-2S]-[ferredoxin] + 2 S-adenosyl-L-methionine = 2-methyladenosine(2503) in 23S rRNA + 5'-deoxyadenosine + L-methionine + 2 oxidized [2Fe-2S]-[ferredoxin] + S-adenosyl-L-homocysteine. The catalysed reaction is adenosine(37) in tRNA + 2 reduced [2Fe-2S]-[ferredoxin] + 2 S-adenosyl-L-methionine = 2-methyladenosine(37) in tRNA + 5'-deoxyadenosine + L-methionine + 2 oxidized [2Fe-2S]-[ferredoxin] + S-adenosyl-L-homocysteine. Functionally, specifically methylates position 2 of adenine 2503 in 23S rRNA and position 2 of adenine 37 in tRNAs. m2A2503 modification seems to play a crucial role in the proofreading step occurring at the peptidyl transferase center and thus would serve to optimize ribosomal fidelity. The polypeptide is Dual-specificity RNA methyltransferase RlmN (Shewanella oneidensis (strain ATCC 700550 / JCM 31522 / CIP 106686 / LMG 19005 / NCIMB 14063 / MR-1)).